A 440-amino-acid chain; its full sequence is Thymidine phosphorylase (440 aa).

This sequence belongs to the thymidine/pyrimidine-nucleoside phosphorylase family. As to quaternary structure, homodimer.

It catalyses the reaction thymidine + phosphate = 2-deoxy-alpha-D-ribose 1-phosphate + thymine. It participates in pyrimidine metabolism; dTMP biosynthesis via salvage pathway; dTMP from thymine: step 1/2. In terms of biological role, the enzymes which catalyze the reversible phosphorolysis of pyrimidine nucleosides are involved in the degradation of these compounds and in their utilization as carbon and energy sources, or in the rescue of pyrimidine bases for nucleotide synthesis. The protein is Thymidine phosphorylase of Proteus mirabilis (strain HI4320).